A 297-amino-acid chain; its full sequence is N-acetylmuramic acid 6-phosphate etherase (297 aa).

Positions alanine 55–lysine 218 constitute an SIS domain. Catalysis depends on glutamate 83, which acts as the Proton donor. Glutamate 114 is an active-site residue.

The protein belongs to the GCKR-like family. MurNAc-6-P etherase subfamily. As to quaternary structure, homodimer.

The catalysed reaction is N-acetyl-D-muramate 6-phosphate + H2O = N-acetyl-D-glucosamine 6-phosphate + (R)-lactate. The protein operates within amino-sugar metabolism; N-acetylmuramate degradation. Functionally, specifically catalyzes the cleavage of the D-lactyl ether substituent of MurNAc 6-phosphate, producing GlcNAc 6-phosphate and D-lactate. The sequence is that of N-acetylmuramic acid 6-phosphate etherase from Lactobacillus gasseri (strain ATCC 33323 / DSM 20243 / BCRC 14619 / CIP 102991 / JCM 1131 / KCTC 3163 / NCIMB 11718 / NCTC 13722 / AM63).